We begin with the raw amino-acid sequence, 226 residues long: MSFVNIRSSRGPVVKVCGLQSLKAAQCALDSDADLLGIICVPGRERTVDPVVAMEISALVRACRTSMSTPKYLVGVFRNQSKEDVLRIANDYGIDIVQLHGDEPWQEYQKFLGLPVIKRLVFPRDCDILLSTPSEKTHLFMPLFDSEAGGTGELLDWNSISDWFAEQGNPECLQFMLAGGLTPENVSDALQLHGVIGVDVSGGVETNGMKDMDKITNFVRNAKKES.

The protein belongs to the TrpF family.

The enzyme catalyses N-(5-phospho-beta-D-ribosyl)anthranilate = 1-(2-carboxyphenylamino)-1-deoxy-D-ribulose 5-phosphate. The protein operates within amino-acid biosynthesis; L-tryptophan biosynthesis; L-tryptophan from chorismate: step 3/5. This chain is N-(5'-phosphoribosyl)anthranilate isomerase (TRP1), found in Saccharomyces kudriavzevii (strain ATCC MYA-4449 / AS 2.2408 / CBS 8840 / NBRC 1802 / NCYC 2889) (Yeast).